The primary structure comprises 238 residues: Ribonuclease 3 (238 aa).

The 133-residue stretch at 9–141 (LIDFMEKIGY…VVAAVYIDGG (133 aa)) folds into the RNase III domain. E54 is a binding site for Mg(2+). D58 is an active-site residue. D127 and E130 together coordinate Mg(2+). Residue E130 is part of the active site. Positions 168–237 (DYKTSLQEIT…ARRAIEKLKG (70 aa)) constitute a DRBM domain.

Belongs to the ribonuclease III family. Homodimer. It depends on Mg(2+) as a cofactor.

It localises to the cytoplasm. The catalysed reaction is Endonucleolytic cleavage to 5'-phosphomonoester.. Functionally, digests double-stranded RNA. Involved in the processing of primary rRNA transcript to yield the immediate precursors to the large and small rRNAs (23S and 16S). Processes some mRNAs, and tRNAs when they are encoded in the rRNA operon. Processes pre-crRNA and tracrRNA of type II CRISPR loci if present in the organism. The polypeptide is Ribonuclease 3 (Pseudothermotoga lettingae (strain ATCC BAA-301 / DSM 14385 / NBRC 107922 / TMO) (Thermotoga lettingae)).